The primary structure comprises 222 residues: Transmembrane reductase CYB561D2 (222 aa).

Residues A2–T17 lie on the Cytoplasmic side of the membrane. Residues A14–R217 enclose the Cytochrome b561 domain. The helical transmembrane segment at A18–A38 threads the bilayer. At R39–S46 the chain is on the lumenal side. Residues W47 to F67 traverse the membrane as a helical segment. Residue H48 participates in heme b binding. Residues S68–C85 lie on the Cytoplasmic side of the membrane. Residues H86 and H120 each coordinate heme b. The chain crosses the membrane as a helical span at residues H86–L106. At H107–Q122 the chain is on the lumenal side. The helical transmembrane segment at A123 to Y143 threads the bilayer. Over P144 to S162 the chain is Cytoplasmic. H159 lines the heme b pocket. Residues G163–F183 traverse the membrane as a helical segment. The Lumenal segment spans residues T184 to S186. Residues V187–M207 traverse the membrane as a helical segment. Residues N208–P222 are Cytoplasmic-facing.

It depends on heme b as a cofactor.

Its subcellular location is the endoplasmic reticulum membrane. The protein localises to the cytoplasmic vesicle membrane. The catalysed reaction is monodehydro-L-ascorbate radical(out) + L-ascorbate(in) = monodehydro-L-ascorbate radical(in) + L-ascorbate(out). The enzyme catalyses Fe(3+)(out) + L-ascorbate(in) = monodehydro-L-ascorbate radical(in) + Fe(2+)(out) + H(+). Functionally, transmembrane reductase that may use ascorbate as an electron donor in the cytoplasm and transfer electrons across endoplasmic reticulum membranes to reduce monodehydro-L-ascorbate radical and iron cations Fe(3+) in the lumen of that compartment. In Homo sapiens (Human), this protein is Transmembrane reductase CYB561D2.